The sequence spans 291 residues: 4-hydroxy-tetrahydrodipicolinate synthase (291 aa).

Residue threonine 44 coordinates pyruvate. The active-site Proton donor/acceptor is tyrosine 132. Lysine 160 serves as the catalytic Schiff-base intermediate with substrate. Isoleucine 202 is a pyruvate binding site.

It belongs to the DapA family. As to quaternary structure, homotetramer; dimer of dimers.

It is found in the cytoplasm. It carries out the reaction L-aspartate 4-semialdehyde + pyruvate = (2S,4S)-4-hydroxy-2,3,4,5-tetrahydrodipicolinate + H2O + H(+). It functions in the pathway amino-acid biosynthesis; L-lysine biosynthesis via DAP pathway; (S)-tetrahydrodipicolinate from L-aspartate: step 3/4. Its function is as follows. Catalyzes the condensation of (S)-aspartate-beta-semialdehyde [(S)-ASA] and pyruvate to 4-hydroxy-tetrahydrodipicolinate (HTPA). The protein is 4-hydroxy-tetrahydrodipicolinate synthase of Rhizorhabdus wittichii (strain DSM 6014 / CCUG 31198 / JCM 15750 / NBRC 105917 / EY 4224 / RW1) (Sphingomonas wittichii).